The following is a 201-amino-acid chain: Orotate phosphoribosyltransferase (201 aa).

113-121 contacts 5-phospho-alpha-D-ribose 1-diphosphate; it reads EDIITTGKS. Residues T117 and R145 each coordinate orotate.

It belongs to the purine/pyrimidine phosphoribosyltransferase family. PyrE subfamily. Homodimer. It depends on Mg(2+) as a cofactor.

It carries out the reaction orotidine 5'-phosphate + diphosphate = orotate + 5-phospho-alpha-D-ribose 1-diphosphate. It participates in pyrimidine metabolism; UMP biosynthesis via de novo pathway; UMP from orotate: step 1/2. Its function is as follows. Catalyzes the transfer of a ribosyl phosphate group from 5-phosphoribose 1-diphosphate to orotate, leading to the formation of orotidine monophosphate (OMP). The chain is Orotate phosphoribosyltransferase from Helicobacter pylori (strain HPAG1).